Reading from the N-terminus, the 249-residue chain is MQILLEDPTKAAQAQVLASQLNQTDYPQFALVFTPERLELRKLDEPKLGAVYVDFVEGAVAHRRKFGGGRGQSIAKAVGLKAGAMPTVVDATAGLGRDAFVLASLGCKVTLIERSPVVAALLQDGLMRAAQDPEIGPWVSERMRLLQGPAVDNLLALPERPDVIYLDPMFPHKQKSALVKKEMRVFQSLVGPDLDADALLPAALQMADKRVVVKRPDYAGWLNEHKPSMAIETKSNRFDVYVMAALAAG.

S-adenosyl-L-methionine-binding positions include 97–98 (RD), 113–114 (ER), and aspartate 167.

It belongs to the methyltransferase superfamily. RsmJ family.

It is found in the cytoplasm. It catalyses the reaction guanosine(1516) in 16S rRNA + S-adenosyl-L-methionine = N(2)-methylguanosine(1516) in 16S rRNA + S-adenosyl-L-homocysteine + H(+). Specifically methylates the guanosine in position 1516 of 16S rRNA. The sequence is that of Ribosomal RNA small subunit methyltransferase J from Aeromonas salmonicida (strain A449).